Here is a 424-residue protein sequence, read N- to C-terminus: Lipoamide acyltransferase component of branched-chain alpha-keto acid dehydrogenase complex (424 aa).

A Lipoyl-binding domain is found at 3–78 (IEQMTMPQLG…QVGEMICKIE (76 aa)). Residue Lys44 is modified to N6-lipoyllysine. The interval 82–115 (ANPAEQKQEQPAASEAAENPVAKSAGAADQPNKK) is disordered. Residues 116–153 (RYSPAVLRLAGEHGIDLDQVTGTGAGGRITRKDIQRLI) enclose the Peripheral subunit-binding (PSBD) domain. A disordered region spans residues 154–193 (ETGGVQEQNPEELKTAAPAPKSASKPEPKEETSYPASAAG). Residues His395 and Asp399 contribute to the active site.

It belongs to the 2-oxoacid dehydrogenase family. Forms a 24-polypeptide structural core with octahedral symmetry. The cofactor is (R)-lipoate.

It catalyses the reaction N(6)-[(R)-dihydrolipoyl]-L-lysyl-[protein] + 2-methylpropanoyl-CoA = N(6)-[(R)-S(8)-2-methylpropanoyldihydrolipoyl]-L-lysyl-[protein] + CoA. Functionally, the branched-chain alpha-keto dehydrogenase complex catalyzes the overall conversion of alpha-keto acids to acyl-CoA and CO(2). It contains multiple copies of three enzymatic components: branched-chain alpha-keto acid decarboxylase (E1), lipoamide acyltransferase (E2) and lipoamide dehydrogenase (E3). This Bacillus subtilis (strain 168) protein is Lipoamide acyltransferase component of branched-chain alpha-keto acid dehydrogenase complex (bfmBB).